The primary structure comprises 175 residues: Coagulogen (175 aa).

Cystine bridges form between cysteine 8-cysteine 167, cysteine 10-cysteine 95, cysteine 60-cysteine 161, cysteine 65-cysteine 121, cysteine 75-cysteine 168, cysteine 88-cysteine 140, cysteine 127-cysteine 170, and cysteine 134-cysteine 172.

It belongs to the coagulin family. Coagulogen is cleaved after Arg-18 and Arg-46 by a clotting enzyme contained in the hemocyte and activated by a bacterial endotoxin (lipopolysaccharide). This cleavage releases the peptide C and leaves 2 chains of coagulin, A and B, linked by two disulfide bonds. Coagulin molecules interlink to form a gel. In terms of tissue distribution, hemolymph.

The protein resides in the secreted. Functionally, coagulogen is a gel-forming protein of hemolymph; it hinders the spread of invaders by immobilizing them. The sequence is that of Coagulogen from Tachypleus gigas (Southeast Asian horseshoe crab).